Reading from the N-terminus, the 431-residue chain is Dihydroorotase (431 aa).

Zn(2+) contacts are provided by His-59 and His-61. Residues 61-63 (HLR) and Asn-93 contribute to the substrate site. Residues Asp-151, His-178, His-231, and Asp-304 each contribute to the Zn(2+) site. Residue Asp-304 is part of the active site. Substrate-binding positions include His-308 and 322–323 (FG).

The protein belongs to the metallo-dependent hydrolases superfamily. DHOase family. Class I DHOase subfamily. It depends on Zn(2+) as a cofactor.

It carries out the reaction (S)-dihydroorotate + H2O = N-carbamoyl-L-aspartate + H(+). The protein operates within pyrimidine metabolism; UMP biosynthesis via de novo pathway; (S)-dihydroorotate from bicarbonate: step 3/3. Catalyzes the reversible cyclization of carbamoyl aspartate to dihydroorotate. This is Dihydroorotase from Thermoanaerobacter sp. (strain X514).